A 182-amino-acid polypeptide reads, in one-letter code: Crossover junction endodeoxyribonuclease RuvC (182 aa).

Catalysis depends on residues Asp-7, Glu-67, and Asp-139. Asp-7, Glu-67, and Asp-139 together coordinate Mg(2+).

Belongs to the RuvC family. As to quaternary structure, homodimer which binds Holliday junction (HJ) DNA. The HJ becomes 2-fold symmetrical on binding to RuvC with unstacked arms; it has a different conformation from HJ DNA in complex with RuvA. In the full resolvosome a probable DNA-RuvA(4)-RuvB(12)-RuvC(2) complex forms which resolves the HJ. The cofactor is Mg(2+).

The protein resides in the cytoplasm. The enzyme catalyses Endonucleolytic cleavage at a junction such as a reciprocal single-stranded crossover between two homologous DNA duplexes (Holliday junction).. Functionally, the RuvA-RuvB-RuvC complex processes Holliday junction (HJ) DNA during genetic recombination and DNA repair. Endonuclease that resolves HJ intermediates. Cleaves cruciform DNA by making single-stranded nicks across the HJ at symmetrical positions within the homologous arms, yielding a 5'-phosphate and a 3'-hydroxyl group; requires a central core of homology in the junction. The consensus cleavage sequence is 5'-(A/T)TT(C/G)-3'. Cleavage occurs on the 3'-side of the TT dinucleotide at the point of strand exchange. HJ branch migration catalyzed by RuvA-RuvB allows RuvC to scan DNA until it finds its consensus sequence, where it cleaves and resolves the cruciform DNA. This chain is Crossover junction endodeoxyribonuclease RuvC, found in Bordetella petrii (strain ATCC BAA-461 / DSM 12804 / CCUG 43448).